The following is a 246-amino-acid chain: Probable ABC transporter permease protein BMEII0107 (246 aa).

The next 6 membrane-spanning stretches (helical) occupy residues 12–32 (LLSF…GAVV), 63–83 (VLSG…LMGW), 94–114 (WVQF…IVTL), 122–142 (IFVI…QGVI), 172–192 (VPFI…TVVA), and 211–231 (LYYD…LGLF). One can recognise an ABC transmembrane type-1 domain in the interval 56 to 236 (IFASLRRVLS…ILGLFMDRLL (181 aa)).

It belongs to the binding-protein-dependent transport system permease family. The complex is composed of two ATP-binding proteins (BMEII0108), two transmembrane proteins (BMEII0107) and a solute-binding protein (BMEII0109).

It localises to the cell inner membrane. Its function is as follows. Probably part of an ABC transporter complex. Probably responsible for the translocation of the substrate across the membrane. The protein is Probable ABC transporter permease protein BMEII0107 of Brucella melitensis biotype 1 (strain ATCC 23456 / CCUG 17765 / NCTC 10094 / 16M).